The sequence spans 325 residues: Ferrochelatase (325 aa).

Residues histidine 195 and glutamate 276 each coordinate Fe cation.

It belongs to the ferrochelatase family.

It is found in the cytoplasm. The catalysed reaction is heme b + 2 H(+) = protoporphyrin IX + Fe(2+). The protein operates within porphyrin-containing compound metabolism; protoheme biosynthesis; protoheme from protoporphyrin-IX: step 1/1. Functionally, catalyzes the ferrous insertion into protoporphyrin IX. This chain is Ferrochelatase, found in Methylococcus capsulatus (strain ATCC 33009 / NCIMB 11132 / Bath).